The following is a 619-amino-acid chain: Trihelix transcription factor GTL2 (619 aa).

2 disordered regions span residues 11 to 41 (HRFIASPPPPPPLPPHQPAAERSLPFPVSFS) and 62 to 100 (HHHHHHHHHDIKDGGATTGEWIGQTDHDDSDNHHQHHHH). Over residues 16–27 (SPPPPPPLPPHQ) the composition is skewed to pro residues. Positions 102–154 (PWCSDEVLALLRFRSTVENWFPEFTWEHTSRKLAEVGFKRSPQECKEKFEEEE) constitute a Myb-like 1 domain. Residues 307–361 (VRNMIAQQEEMHKKLLEDMVKKEEEKIAREEAWKKQEIERVNKEVEIRAQEQAMA) adopt a coiled-coil conformation. Disordered regions lie at residues 382-414 (VVQNPTSPSQDSSSLALRKTQGRRKFQTSSSLL) and 434-458 (STKTLKPKNQNPKPPKSDDKSDLGK). Residues 384–396 (QNPTSPSQDSSSL) are compositionally biased toward polar residues. The span at 435 to 444 (TKTLKPKNQN) shows a compositional bias: low complexity. Over residues 448 to 458 (PKSDDKSDLGK) the composition is skewed to basic and acidic residues. One can recognise a Myb-like 2 domain in the interval 459–526 (RWPKDEVLAL…RCKEKWENIN (68 aa)). Residues 503-510 (SKKMLEIG) carry the Nuclear localization signal motif. Positions 557 to 619 (SQPPTGTTAT…VQFSGFDLEF (63 aa)) are disordered. Low complexity predominate over residues 561 to 574 (TGTTATTATTATSA). Residues 575-585 (RDLDTRPEENR) show a composition bias toward basic and acidic residues.

It is found in the nucleus. Probable transcription factor that binds specific DNA sequence. The sequence is that of Trihelix transcription factor GTL2 from Arabidopsis thaliana (Mouse-ear cress).